We begin with the raw amino-acid sequence, 338 residues long: DNA-directed RNA polymerase subunit alpha (338 aa).

An alpha N-terminal domain (alpha-NTD) region spans residues 1-234; that stretch reads MIQKNWQELT…DQLNVFVNFE (234 aa). Residues 250–338 form an alpha C-terminal domain (alpha-CTD) region; it reads FNPALLKKVD…DLAKRFEEHY (89 aa).

The protein belongs to the RNA polymerase alpha chain family. In terms of assembly, homodimer. The RNAP catalytic core consists of 2 alpha, 1 beta, 1 beta' and 1 omega subunit. When a sigma factor is associated with the core the holoenzyme is formed, which can initiate transcription.

It carries out the reaction RNA(n) + a ribonucleoside 5'-triphosphate = RNA(n+1) + diphosphate. Functionally, DNA-dependent RNA polymerase catalyzes the transcription of DNA into RNA using the four ribonucleoside triphosphates as substrates. The protein is DNA-directed RNA polymerase subunit alpha of Methylocella silvestris (strain DSM 15510 / CIP 108128 / LMG 27833 / NCIMB 13906 / BL2).